Here is a 145-residue protein sequence, read N- to C-terminus: Large ribosomal subunit protein uL13 (145 aa).

It belongs to the universal ribosomal protein uL13 family. Part of the 50S ribosomal subunit.

Functionally, this protein is one of the early assembly proteins of the 50S ribosomal subunit, although it is not seen to bind rRNA by itself. It is important during the early stages of 50S assembly. This chain is Large ribosomal subunit protein uL13, found in Bacillus cereus (strain G9842).